The sequence spans 829 residues: MKMTRRAFVKANAAASAAAVAGITLPASAANLIASSDQTKITWDKAPCRFCGTGCSVLVGTQNGKVVATQGDPEAPVNKGLNCIKGYFLSKIMYGQDRLTQPLLRMKDGKYDKEGDFTPVSWDVAFDTMAEKWKASLAKKGPTSIGMFGSGQWTVMEGYAAAKMMKAGFRSNNIDPNARHCMASAVVGFMRTFGIDEPMGCYDDFEHADSFVLWGSNMAEMHPVLWTRITDRRLSHPHVKVNVLSTYYHRSFELADSGYIFKPQSDLAIANFIANYIIQNDAVNWDFVNKHTNFKQATTDIGYGLRDDDPLQKQAKNPNSGNMTSISFEEYKKSVAPYTVEKASEMSGVAQDKLIELAKQYADPNTKVMSLWTMGMNQHTRGVWMNSLVYNIHLLTGKIATPGNSPFSLTGQPSACGTAREVGTFAHRLPADMVVANPKHRAIAEKIWKLPEGTIPPKPGFHAVLQDRMLHDGVLNCYWVQCNNNMQAGPNINGERLPGYRNPENFIVVSDPYPTATAQAADLILPTAMWIEKEGAYGNAERRTQAWYQQVGTVGEAKSDLWQVMEFSKRFKMEEVWPEELLAKAPQYRGKTMYDMLFANGQVDKFPLSEARQLNDDSHHFGFYVQKGLFEEYAEFGRGHGHDLAPYDVYHTVRGLRWPVVDGKETLWRYKEGSDPYAKKGSGWDFYGKPDGKALIISAPYEAPPESPDAEYDMWLCTGRVLEHWHTGTMTRRVPELYKAVPDAVCYIHPEDAKARGLRRGDEVLISNKRGEVRVRVETRGRNRPPQGLVFVPFFDARILINKLILDATDPLSKQTDFKKCPVKITKVA.

Residues 1–30 constitute a signal peptide (tat-type signal); sequence MKMTRRAFVKANAAASAAAVAGITLPASAA. In terms of domain architecture, 4Fe-4S Mo/W bis-MGD-type spans 41–97; sequence ITWDKAPCRFCGTGCSVLVGTQNGKVVATQGDPEAPVNKGLNCIKGYFLSKIMYGQD. The [4Fe-4S] cluster site is built by cysteine 48, cysteine 51, cysteine 55, and cysteine 83. Residues lysine 85, glutamine 152, asparagine 177, cysteine 181, 214 to 221, 245 to 249, 264 to 266, methionine 374, glutamine 378, asparagine 484, 510 to 511, lysine 533, aspartate 560, and 718 to 727 each bind Mo-bis(molybdopterin guanine dinucleotide); these read WGSNMAEM, STYYH, QSD, SD, and TGRVLEHWHT. Phenylalanine 794 is a binding site for substrate. Asparagine 802 and lysine 819 together coordinate Mo-bis(molybdopterin guanine dinucleotide).

The protein belongs to the prokaryotic molybdopterin-containing oxidoreductase family. NasA/NapA/NarB subfamily. In terms of assembly, component of the periplasmic nitrate reductase NapAB complex composed of NapA and NapB. It depends on [4Fe-4S] cluster as a cofactor. Requires Mo-bis(molybdopterin guanine dinucleotide) as cofactor. Predicted to be exported by the Tat system. The position of the signal peptide cleavage has not been experimentally proven.

It is found in the periplasm. It carries out the reaction 2 Fe(II)-[cytochrome] + nitrate + 2 H(+) = 2 Fe(III)-[cytochrome] + nitrite + H2O. Functionally, catalytic subunit of the periplasmic nitrate reductase complex NapAB. Receives electrons from NapB and catalyzes the reduction of nitrate to nitrite. This chain is Periplasmic nitrate reductase, found in Vibrio vulnificus (strain YJ016).